A 180-amino-acid chain; its full sequence is Shikimate kinase (180 aa).

14 to 19 lines the ATP pocket; that stretch reads GAGKSC. Ser-18 contacts Mg(2+). Asp-36, Arg-60, and Gly-82 together coordinate substrate. Position 120 (Arg-120) interacts with ATP. Residue Arg-139 coordinates substrate.

Belongs to the shikimate kinase family. In terms of assembly, monomer. Mg(2+) serves as cofactor.

Its subcellular location is the cytoplasm. It catalyses the reaction shikimate + ATP = 3-phosphoshikimate + ADP + H(+). It participates in metabolic intermediate biosynthesis; chorismate biosynthesis; chorismate from D-erythrose 4-phosphate and phosphoenolpyruvate: step 5/7. Its function is as follows. Catalyzes the specific phosphorylation of the 3-hydroxyl group of shikimic acid using ATP as a cosubstrate. In Xanthomonas oryzae pv. oryzae (strain PXO99A), this protein is Shikimate kinase.